A 324-amino-acid polypeptide reads, in one-letter code: Lipoyl synthase (324 aa).

[4Fe-4S] cluster is bound by residues C72, C77, C83, C98, C102, C105, and S313. A Radical SAM core domain is found at 84-302 (FRFGTASFMI…AQEGKKMGFL (219 aa)).

It belongs to the radical SAM superfamily. Lipoyl synthase family. The cofactor is [4Fe-4S] cluster.

Its subcellular location is the cytoplasm. It carries out the reaction [[Fe-S] cluster scaffold protein carrying a second [4Fe-4S](2+) cluster] + N(6)-octanoyl-L-lysyl-[protein] + 2 oxidized [2Fe-2S]-[ferredoxin] + 2 S-adenosyl-L-methionine + 4 H(+) = [[Fe-S] cluster scaffold protein] + N(6)-[(R)-dihydrolipoyl]-L-lysyl-[protein] + 4 Fe(3+) + 2 hydrogen sulfide + 2 5'-deoxyadenosine + 2 L-methionine + 2 reduced [2Fe-2S]-[ferredoxin]. Its pathway is protein modification; protein lipoylation via endogenous pathway; protein N(6)-(lipoyl)lysine from octanoyl-[acyl-carrier-protein]: step 2/2. Its function is as follows. Catalyzes the radical-mediated insertion of two sulfur atoms into the C-6 and C-8 positions of the octanoyl moiety bound to the lipoyl domains of lipoate-dependent enzymes, thereby converting the octanoylated domains into lipoylated derivatives. The chain is Lipoyl synthase from Dichelobacter nodosus (strain VCS1703A).